A 135-amino-acid polypeptide reads, in one-letter code: MRVIQTAGKRKTAVARATIREGKGRVRINHKPVEIIEPEIARFTIMEPLILAGEEIVSRVDIDVKVEGGGFMGQAEAARVAIARALVEWTNDMNLKEKFMKYDRTMLVGDSRRTEPHKPNRSTKGPRAKRQKSYR.

Residues 108–118 are compositionally biased toward basic and acidic residues; it reads VGDSRRTEPHK. The interval 108–135 is disordered; that stretch reads VGDSRRTEPHKPNRSTKGPRAKRQKSYR. Over residues 119–135 the composition is skewed to basic residues; it reads PNRSTKGPRAKRQKSYR.

It belongs to the universal ribosomal protein uS9 family. In terms of assembly, part of the 30S ribosomal subunit.

This is Small ribosomal subunit protein uS9 from Thermococcus kodakarensis (strain ATCC BAA-918 / JCM 12380 / KOD1) (Pyrococcus kodakaraensis (strain KOD1)).